Consider the following 217-residue polypeptide: tRNA (guanine-N(7)-)-methyltransferase (217 aa).

4 residues coordinate S-adenosyl-L-methionine: E44, E69, D96, and D118. Residue D118 is part of the active site. Residues K122, D154, and 191 to 194 (TEYE) each bind substrate.

Belongs to the class I-like SAM-binding methyltransferase superfamily. TrmB family.

It carries out the reaction guanosine(46) in tRNA + S-adenosyl-L-methionine = N(7)-methylguanosine(46) in tRNA + S-adenosyl-L-homocysteine. It functions in the pathway tRNA modification; N(7)-methylguanine-tRNA biosynthesis. Its function is as follows. Catalyzes the formation of N(7)-methylguanine at position 46 (m7G46) in tRNA. The protein is tRNA (guanine-N(7)-)-methyltransferase of Bacillus thuringiensis (strain Al Hakam).